The primary structure comprises 306 residues: D-alanine--D-alanine ligase (306 aa).

The ATP-grasp domain occupies 102-300; sequence KIIAANAGVC…YGDIVQWMVE (199 aa). 128–183 serves as a coordination point for ATP; sequence PMEPPYVIKPVCEGSSFGVVIVQENEAVPPHNIGGSEWGYADEVMVEKYIPGRELT. Residues Asp-253, Glu-267, and Asn-269 each coordinate Mg(2+).

The protein belongs to the D-alanine--D-alanine ligase family. Mg(2+) is required as a cofactor. Mn(2+) serves as cofactor.

Its subcellular location is the cytoplasm. It carries out the reaction 2 D-alanine + ATP = D-alanyl-D-alanine + ADP + phosphate + H(+). Its pathway is cell wall biogenesis; peptidoglycan biosynthesis. Its function is as follows. Cell wall formation. The chain is D-alanine--D-alanine ligase from Bartonella tribocorum (strain CIP 105476 / IBS 506).